We begin with the raw amino-acid sequence, 225 residues long: C-type lectin domain-containing protein 91 (225 aa).

Positions 1–21 (MRSTYILIIVPLIIIGGGVVA) are cleaved as a signal peptide. In terms of domain architecture, C-type lectin spans 85-215 (YSDSCYFIET…CTMAFKSICE (131 aa)). Cystine bridges form between Cys106-Cys214 and Cys185-Cys206. The N-linked (GlcNAc...) asparagine glycan is linked to Asn217.

The protein localises to the secreted. The protein is C-type lectin domain-containing protein 91 (clec-91) of Caenorhabditis elegans.